Consider the following 37-residue polypeptide: uncharacterized protein (37 aa).

Residues 13–33 (TFLTIIVLLMIVFGIAIVALL) form a helical membrane-spanning segment.

It localises to the host membrane. This is an uncharacterized protein from Acidianus convivator (ABV).